Reading from the N-terminus, the 156-residue chain is Small ribosomal subunit protein uS7 (156 aa).

This sequence belongs to the universal ribosomal protein uS7 family. As to quaternary structure, part of the 30S ribosomal subunit. Contacts proteins S9 and S11.

Functionally, one of the primary rRNA binding proteins, it binds directly to 16S rRNA where it nucleates assembly of the head domain of the 30S subunit. Is located at the subunit interface close to the decoding center, probably blocks exit of the E-site tRNA. The polypeptide is Small ribosomal subunit protein uS7 (Bordetella petrii (strain ATCC BAA-461 / DSM 12804 / CCUG 43448)).